Reading from the N-terminus, the 212-residue chain is Large ribosomal subunit protein uL3 (212 aa).

The segment at 127 to 153 (FRGGPATHGQSDRHRAPGSIGSGTTPG) is disordered.

This sequence belongs to the universal ribosomal protein uL3 family. Part of the 50S ribosomal subunit. Forms a cluster with proteins L14 and L19.

In terms of biological role, one of the primary rRNA binding proteins, it binds directly near the 3'-end of the 23S rRNA, where it nucleates assembly of the 50S subunit. This Herpetosiphon aurantiacus (strain ATCC 23779 / DSM 785 / 114-95) protein is Large ribosomal subunit protein uL3.